The sequence spans 36 residues: Delta-amaurobitoxin-Pl1c (36 aa).

4 disulfides stabilise this stretch: Cys-3-Cys-19, Cys-10-Cys-24, Cys-18-Cys-34, and Cys-26-Cys-32.

As to expression, expressed by the venom gland.

The protein localises to the secreted. Functionally, binds at site 4 of sodium channels (Nav) and inhibits the fast inactivation of cockroach channels. This toxin is active only on insects. Has a potent activity against S.litura larvae. This chain is Delta-amaurobitoxin-Pl1c, found in Pireneitega luctuosa (Tangled nest spider).